The primary structure comprises 25 residues: Large ribosomal subunit protein uL30 (25 aa).

The protein belongs to the universal ribosomal protein uL30 family. Part of the 50S ribosomal subunit.

This Pseudomonas putida (Arthrobacter siderocapsulatus) protein is Large ribosomal subunit protein uL30 (rpmD).